Consider the following 439-residue polypeptide: Proline--tRNA ligase (439 aa).

This sequence belongs to the class-II aminoacyl-tRNA synthetase family. ProS type 2 subfamily. As to quaternary structure, homodimer.

It is found in the cytoplasm. It catalyses the reaction tRNA(Pro) + L-proline + ATP = L-prolyl-tRNA(Pro) + AMP + diphosphate. Catalyzes the attachment of proline to tRNA(Pro) in a two-step reaction: proline is first activated by ATP to form Pro-AMP and then transferred to the acceptor end of tRNA(Pro). In Beijerinckia indica subsp. indica (strain ATCC 9039 / DSM 1715 / NCIMB 8712), this protein is Proline--tRNA ligase.